A 316-amino-acid chain; its full sequence is B3 domain-containing protein Os04g0581400 (316 aa).

The interval 1–100 (MEFATTSSRF…GSGGGGGGED (100 aa)) is disordered. Residues 13–36 (EEEEEEEGEQEMEQEQDEEEEEAE) show a composition bias toward acidic residues. Positions 46–77 (TSAAAAATASSSSPTSVSPSATASAAASTSAS) are enriched in low complexity. The span at 88-98 (GASGSGGGGGG) shows a compositional bias: gly residues. The segment at residues 110–215 (FDKVVTPSDV…RLFIDWKRRA (106 aa)) is a DNA-binding region (TF-B3). A disordered region spans residues 239 to 290 (GGAGASSCRPRRPPRSTSITAFARASTSATSTPLCRRGSSSSSAPQGRGFIS). Residues 253–270 (RSTSITAFARASTSATST) show a composition bias toward low complexity.

It is found in the nucleus. The protein is B3 domain-containing protein Os04g0581400 of Oryza sativa subsp. japonica (Rice).